Here is a 324-residue protein sequence, read N- to C-terminus: mRNA decay activator protein ZFP36 (324 aa).

The tract at residues 1–15 is necessary for nuclear export; sequence MDLAAIYKSLLSLSP. A necessary and sufficient for the association with mRNA decay enzymes and mRNA decay activation region spans residues 1 to 98; it reads MDLAAIYKSL…PTSPTATPTT (98 aa). Necessary for localization of ARE-containing mRNAs to processing bodies (PBs) stretches follow at residues 1 to 172 and 98 to 324; these read MDLA…DLAA and TSSR…SVSE. Residues 15-46 are compositionally biased toward low complexity; sequence PELPSDLGETESSTSWASSGPWSLSSSDSSLP. The segment at 15 to 50 is disordered; the sequence is PELPSDLGETESSTSWASSGPWSLSSSDSSLPEVAA. Ser-58 is subject to Phosphoserine; by MAPKAPK2. Ser-64 bears the Phosphoserine mark. The stretch at 69–73 is one P-P-P-P-G repeat; the sequence is PPPPG. A disordered region spans residues 76 to 100; the sequence is PLAPRPSSDWSPSPTSPTATPTTSS. A phosphoserine mark is found at Ser-86 and Ser-88. A Phosphothreonine modification is found at Thr-90. Ser-91 carries the post-translational modification Phosphoserine. Residues 93–166 form a necessary for nuclear localization region; the sequence is TATPTTSSRY…GSRCHFIHNP (74 aa). The interval 95 to 171 is necessary for RNA-binding; sequence TPTTSSRYKT…FIHNPSEDLA (77 aa). C3H1-type zinc fingers lie at residues 101–129 and 139–167; these read RYKTELCRTFSESGRCRYGAKCQFAHGLG and KYKTELCHKFYLQGRCPYGSRCHFIHNPS. A necessary for interaction with PABPN1 region spans residues 101–192; it reads RYKTELCRTF…ISFSGLPSGR (92 aa). Phosphoserine is present on Ser-167. The interval 172 to 324 is necessary for mRNA decay activation; it reads APGHPHVLRQ…PIFNRISVSE (153 aa). Ser-184 bears the Phosphoserine; by MAPKAPK2 mark. 2 disordered regions span residues 185 to 227 and 270 to 324; these read FSGL…LLLS and PSAH…SVSE. Ser-195 is subject to Phosphoserine. One copy of the P-P-P-P-G repeat lies at 196–200; that stretch reads PPPAS. Positions 204 to 214 are enriched in low complexity; sequence PSVSSWSFSPS. Phosphoserine is present on Ser-216. The P-P-P-P-G repeat unit spans residues 218–222; it reads PPPPG. Phosphoserine; by MAPK1; in vitro is present on Ser-227. Residues Ser-274, Ser-294, and Ser-321 each carry the phosphoserine modification. Positions 310 to 324 are interaction with CNOT1; sequence APRRLPIFNRISVSE.

Associates with cytoplasmic CCR4-NOT and PAN2-PAN3 deadenylase complexes to trigger ARE-containing mRNA deadenylation and decay processes. Part of a mRNA decay activation complex at least composed of poly(A)-specific exoribonucleases CNOT6, EXOSC2 and XRN1 and mRNA-decapping enzymes DCP1A and DCP2. Associates with the RNA exosome complex. Interacts (via phosphorylated form) with 14-3-3 proteins; these interactions promote exclusion of ZFP36 from cytoplasmic stress granules in response to arsenite treatment in a MAPKAPK2-dependent manner and does not prevent CCR4-NOT deadenylase complex recruitment or ZFP36-induced ARE-containing mRNA deadenylation and decay processes. Interacts with 14-3-3 proteins; these interactions occur in response to rapamycin in an Akt-dependent manner. Interacts with AGO2 and AGO4. Interacts (via C-terminus) with CNOT1; this interaction occurs in a RNA-independent manner and induces mRNA deadenylation. Interacts (via N-terminus) with CNOT6. Interacts with CNOT6L. Interacts (via C-terminus) with CNOT7; this interaction occurs in a RNA-independent manner, induces mRNA deadenylation and is inhibited in a phosphorylation MAPKAPK2-dependent manner. Interacts (via unphosphorylated form) with CNOT8; this interaction occurs in a RNA-independent manner and is inhibited in a phosphorylation MAPKAPK2-dependent manner. Interacts with DCP1A. Interacts (via N-terminus) with DCP2. Interacts with EDC3. Interacts (via N-terminus) with EXOSC2. Interacts with heat shock 70 kDa proteins. Interacts with KHSRP; this interaction increases upon cytokine-induced treatment. Interacts with MAP3K4; this interaction enhances the association with SH3KBP1/CIN85. Interacts with MAPKAPK2; this interaction occurs upon skeletal muscle satellite cell activation. Interacts with NCL. Interacts with NUP214; this interaction increases upon lipopolysaccharide (LPS) stimulation. Interacts with PABPC1; this interaction occurs in a RNA-dependent manner. Interacts (via hypophosphorylated form) with PABPN1 (via RRM domain and C-terminal arginine-rich region); this interaction occurs in the nucleus in a RNA-independent manner, decreases in presence of single-stranded poly(A) RNA-oligomer and in a p38 MAPK-dependent-manner and inhibits nuclear poly(A) tail synthesis. Interacts with PAN2. Interacts (via C3H1-type zinc finger domains) with PKM. Interacts (via C3H1-type zinc finger domains) with nuclear RNA poly(A) polymerase. Interacts with PPP2CA; this interaction occurs in LPS-stimulated cells and induces ZFP36 dephosphorylation, and hence may promote ARE-containing mRNAs decay. Interacts (via C-terminus) with PRR5L (via C-terminus); this interaction may accelerate ZFP36-mediated mRNA decay during stress. Interacts (via C-terminus) with SFN; this interaction occurs in a phosphorylation-dependent manner. Interacts (via extreme C-terminal region) with SH3KBP1/CIN85 (via SH3 domains); this interaction enhances MAP3K4-induced phosphorylation of ZFP36 at Ser-64 and Ser-91 and does not alter neither ZFP36 binding to ARE-containing transcripts nor TNF-alpha mRNA decay. Interacts with XRN1. Interacts (via C-terminus and Ser-184 phosphorylated form) with YWHAB; this interaction occurs in a p38/MAPKAPK2-dependent manner, increases cytoplasmic localization of ZFP36 and protects ZFP36 from Ser-184 dephosphorylation by serine/threonine phosphatase 2A, and hence may be crucial for stabilizing ARE-containing mRNAs. Interacts (via phosphorylated form) with YWHAE. Interacts (via C-terminus) with YWHAG; this interaction occurs in a phosphorylation-dependent manner. Interacts with YWHAH; this interaction occurs in a phosphorylation-dependent manner. Interacts with YWHAQ; this interaction occurs in a phosphorylation-dependent manner. Interacts with (via C-terminus) YWHAZ; this interaction occurs in a phosphorylation-dependent manner. Does not interact with SH3KBP1. Interacts (via P-P-P-P-G repeats) with GIGYF2; the interaction is direct. In terms of processing, phosphorylated. Phosphorylation at serine and/or threonine residues occurs in a p38 MAPK- and MAPKAPK2-dependent manner. Phosphorylated by MAPKAPK2 at Ser-58 and Ser-184; phosphorylation increases its stability and cytoplasmic localization, promotes binding to 14-3-3 adapter proteins and inhibits the recruitment of cytoplasmic CCR4-NOT and PAN2-PAN3 deadenylase complexes to the mRNA decay machinery, thereby inhibiting ZFP36-induced ARE-containing mRNA deadenylation and decay processes. Phosphorylation by MAPKAPK2 does not impair ARE-containing RNA-binding. Phosphorylated in a MAPKAPK2- and p38 MAPK-dependent manner upon skeletal muscle satellite cell activation; this phosphorylation inhibits ZFP36-mediated mRNA decay activity, and hence stabilizes MYOD1 mRNA. Phosphorylated by MAPK1 upon mitogen stimulation. Phosphorylated at Ser-64 and Ser-91; these phosphorylations increase in a SH3KBP1-dependent manner. Phosphorylated at serine and threonine residues in a pyruvate kinase PKM- and p38 MAPK-dependent manner. Phosphorylation at Ser-58 may participate in the PKM-mediated degradation of ZFP36 in a p38 MAPK-dependent manner. Dephosphorylated by serine/threonine phosphatase 2A at Ser-184. Post-translationally, ubiquitinated; pyruvate kinase (PKM)-dependent ubiquitination leads to proteasomal degradation through a p38 MAPK signaling pathway.

Its subcellular location is the nucleus. It localises to the cytoplasm. The protein localises to the cytoplasmic granule. It is found in the P-body. Zinc-finger RNA-binding protein that destabilizes numerous cytoplasmic AU-rich element (ARE)-containing mRNA transcripts by promoting their poly(A) tail removal or deadenylation, and hence provide a mechanism for attenuating protein synthesis. Acts as an 3'-untranslated region (UTR) ARE mRNA-binding adapter protein to communicate signaling events to the mRNA decay machinery. Recruits deadenylase CNOT7 (and probably the CCR4-NOT complex) via association with CNOT1, and hence promotes ARE-mediated mRNA deadenylation. Also functions by recruiting components of the cytoplasmic RNA decay machinery to the bound ARE-containing mRNAs. Self regulates by destabilizing its own mRNA. Binds to 3'-UTR ARE of numerous mRNAs. Also binds to ARE of its own mRNA. Plays a role in anti-inflammatory responses; suppresses tumor necrosis factor (TNF)-alpha production by stimulating ARE-mediated TNF-alpha mRNA decay and several other inflammatory ARE-containing mRNAs in interferon (IFN)- and/or lipopolysaccharide (LPS)-induced macrophages. Also plays a role in the regulation of dendritic cell maturation at the post-transcriptional level, and hence operates as part of a negative feedback loop to limit the inflammatory response. Promotes ARE-mediated mRNA decay of hypoxia-inducible factor HIF1A mRNA during the response of endothelial cells to hypoxia. Positively regulates early adipogenesis of preadipocytes by promoting ARE-mediated mRNA decay of immediate early genes (IEGs). Negatively regulates hematopoietic/erythroid cell differentiation by promoting ARE-mediated mRNA decay of the transcription factor STAT5B mRNA. Plays a role in maintaining skeletal muscle satellite cell quiescence by promoting ARE-mediated mRNA decay of the myogenic determination factor MYOD1 mRNA. Also associates with and regulates the expression of non-ARE-containing target mRNAs at the post-transcriptional level, such as MHC class I mRNAs. Participates in association with argonaute RISC catalytic components in the ARE-mediated mRNA decay mechanism; assists microRNA (miRNA) targeting ARE-containing mRNAs. May also play a role in the regulation of cytoplasmic mRNA decapping; enhances decapping of ARE-containing RNAs, in vitro. Involved in the delivery of target ARE-mRNAs to processing bodies (PBs). In addition to its cytosolic mRNA-decay function, affects nuclear pre-mRNA processing. Negatively regulates nuclear poly(A)-binding protein PABPN1-stimulated polyadenylation activity on ARE-containing pre-mRNA during LPS-stimulated macrophages. Also involved in the regulation of stress granule (SG) and P-body (PB) formation and fusion. Plays a role in the regulation of keratinocyte proliferation, differentiation and apoptosis. Plays a role as a tumor suppressor by inhibiting cell proliferation in breast cancer cells. This Bos taurus (Bovine) protein is mRNA decay activator protein ZFP36.